Reading from the N-terminus, the 812-residue chain is Valine--tRNA ligase (812 aa).

The short motif at 46-56 (PTVSGQLHIGH) is the 'HIGH' region element. The 'KMSKS' region motif lies at 536 to 540 (KMSKS). Residue Lys539 coordinates ATP.

It belongs to the class-I aminoacyl-tRNA synthetase family. ValS type 2 subfamily. As to quaternary structure, monomer.

Its subcellular location is the cytoplasm. The catalysed reaction is tRNA(Val) + L-valine + ATP = L-valyl-tRNA(Val) + AMP + diphosphate. Functionally, catalyzes the attachment of valine to tRNA(Val). As ValRS can inadvertently accommodate and process structurally similar amino acids such as threonine, to avoid such errors, it has a 'posttransfer' editing activity that hydrolyzes mischarged Thr-tRNA(Val) in a tRNA-dependent manner. The sequence is that of Valine--tRNA ligase from Rickettsia bellii (strain OSU 85-389).